We begin with the raw amino-acid sequence, 252 residues long: Triosephosphate isomerase (252 aa).

Residue 9–11 (NWK) coordinates substrate. The active-site Electrophile is the His-98. Catalysis depends on Glu-170, which acts as the Proton acceptor. 2 residues coordinate substrate: Gly-176 and Ser-215.

Belongs to the triosephosphate isomerase family. In terms of assembly, homodimer.

Its subcellular location is the cytoplasm. It carries out the reaction D-glyceraldehyde 3-phosphate = dihydroxyacetone phosphate. Its pathway is carbohydrate biosynthesis; gluconeogenesis. It functions in the pathway carbohydrate degradation; glycolysis; D-glyceraldehyde 3-phosphate from glycerone phosphate: step 1/1. Its function is as follows. Involved in the gluconeogenesis. Catalyzes stereospecifically the conversion of dihydroxyacetone phosphate (DHAP) to D-glyceraldehyde-3-phosphate (G3P). The sequence is that of Triosephosphate isomerase from Buchnera aphidicola subsp. Baizongia pistaciae (strain Bp).